The primary structure comprises 222 residues: Kinetochore protein Spc25 (222 aa).

Residues 51 to 86 (RHQRKVGKLQKVLMERREELDKRVSFIEELDRELEA) are a coiled coil.

This sequence belongs to the SPC25 family. As to quaternary structure, component of the Ndc80 complex, which is composed of Ndc80, Nuf2 and Spc25.

Its subcellular location is the nucleus. It is found in the chromosome. The protein localises to the centromere. The protein resides in the kinetochore. Acts as a component of the essential kinetochore-associated Ndc80 complex, which is required for chromosome segregation and spindle checkpoint activity during meiosis and mitosis. Required for kinetochore integrity and the organization of stable microtubule binding sites in the outer plate of the kinetochore. Participates in SAC signaling that responds specifically to disruptions in spindle microtubule dynamics. The NDC80 complex synergistically enhances the affinity of the SKA1 complex for microtubules and may allow the NDC80 complex to track depolymerizing microtubules. This is Kinetochore protein Spc25 from Drosophila mauritiana (Fruit fly).